The following is a 219-amino-acid chain: Orotate phosphoribosyltransferase (219 aa).

Residue K26 coordinates 5-phospho-alpha-D-ribose 1-diphosphate. 34–35 (FF) contributes to the orotate binding site. 5-phospho-alpha-D-ribose 1-diphosphate contacts are provided by residues 72–73 (YK), R98, K99, K102, H104, and 124–132 (DDVITAGTA). Residues T128 and R156 each coordinate orotate.

It belongs to the purine/pyrimidine phosphoribosyltransferase family. PyrE subfamily. Homodimer. Requires Mg(2+) as cofactor.

It catalyses the reaction orotidine 5'-phosphate + diphosphate = orotate + 5-phospho-alpha-D-ribose 1-diphosphate. Its pathway is pyrimidine metabolism; UMP biosynthesis via de novo pathway; UMP from orotate: step 1/2. In terms of biological role, catalyzes the transfer of a ribosyl phosphate group from 5-phosphoribose 1-diphosphate to orotate, leading to the formation of orotidine monophosphate (OMP). This Xylella fastidiosa (strain 9a5c) protein is Orotate phosphoribosyltransferase.